Reading from the N-terminus, the 319-residue chain is ATP-dependent 6-phosphofructokinase (319 aa).

ATP is bound at residue Gly-11. ADP is bound at residue 21 to 25 (RAVVR). ATP is bound by residues 72 to 73 (RY) and 102 to 105 (GDGS). Position 103 (Asp-103) interacts with Mg(2+). 125-127 (TID) lines the substrate pocket. The Proton acceptor role is filled by Asp-127. Arg-154 serves as a coordination point for ADP. Substrate contacts are provided by residues Arg-162 and 169 to 171 (MGR). Residues 185 to 187 (GAE), Arg-211, and 213 to 215 (KKH) each bind ADP. Residues Glu-222, Arg-243, and 249–252 (HVQR) contribute to the substrate site.

This sequence belongs to the phosphofructokinase type A (PFKA) family. ATP-dependent PFK group I subfamily. Prokaryotic clade 'B1' sub-subfamily. In terms of assembly, homotetramer. The cofactor is Mg(2+).

Its subcellular location is the cytoplasm. The catalysed reaction is beta-D-fructose 6-phosphate + ATP = beta-D-fructose 1,6-bisphosphate + ADP + H(+). The protein operates within carbohydrate degradation; glycolysis; D-glyceraldehyde 3-phosphate and glycerone phosphate from D-glucose: step 3/4. Its activity is regulated as follows. Allosterically activated by ADP and other diphosphonucleosides, and allosterically inhibited by phosphoenolpyruvate. Functionally, catalyzes the phosphorylation of D-fructose 6-phosphate to fructose 1,6-bisphosphate by ATP, the first committing step of glycolysis. The protein is ATP-dependent 6-phosphofructokinase of Listeria monocytogenes serotype 4a (strain HCC23).